The chain runs to 347 residues: Fructose-1,6-bisphosphatase class 1 (347 aa).

Residues E106, D128, I130, and D131 each contribute to the Mg(2+) site. Substrate contacts are provided by residues 131–134 (DGSS), N223, Y251, and K281. E287 contacts Mg(2+).

The protein belongs to the FBPase class 1 family. In terms of assembly, homotetramer. Mg(2+) is required as a cofactor.

Its subcellular location is the cytoplasm. The enzyme catalyses beta-D-fructose 1,6-bisphosphate + H2O = beta-D-fructose 6-phosphate + phosphate. Its pathway is carbohydrate biosynthesis; Calvin cycle. The protein is Fructose-1,6-bisphosphatase class 1 of Synechocystis sp. (strain ATCC 27184 / PCC 6803 / Kazusa).